The sequence spans 369 residues: 2-aminoethylphosphonate--pyruvate transaminase (369 aa).

At lysine 193 the chain carries N6-(pyridoxal phosphate)lysine.

The protein belongs to the class-V pyridoxal-phosphate-dependent aminotransferase family. PhnW subfamily. As to quaternary structure, homodimer. Pyridoxal 5'-phosphate serves as cofactor.

It carries out the reaction (2-aminoethyl)phosphonate + pyruvate = phosphonoacetaldehyde + L-alanine. Its function is as follows. Involved in phosphonate degradation. This is 2-aminoethylphosphonate--pyruvate transaminase from Burkholderia thailandensis (strain ATCC 700388 / DSM 13276 / CCUG 48851 / CIP 106301 / E264).